We begin with the raw amino-acid sequence, 299 residues long: Heat stress transcription factor B-2a (299 aa).

Residues 21–115 (PTPFLTKTFN…LLREIQRRKI (95 aa)) mediate DNA binding. Residues 119–157 (HQTVVAPSSEQRNQTMVVSPSNSGEDNNNNQVMSSSPSS) form a disordered region. The interval 166-211 (TGNGGLSVELLEENEKLRSQNIQLNRELTQMKSICDNIYSLMSNYV) is hydrophobic repeat HR-A/B. The short motif at 261–264 (KRTR) is the Nuclear localization signal element.

It belongs to the HSF family. Class B subfamily. Homotrimer. Post-translationally, exhibits temperature-dependent phosphorylation.

It localises to the nucleus. Its function is as follows. Transcriptional regulator that specifically binds DNA sequence 5'-AGAAnnTTCT-3' known as heat shock promoter elements (HSE). The polypeptide is Heat stress transcription factor B-2a (HSFB2A) (Arabidopsis thaliana (Mouse-ear cress)).